Consider the following 668-residue polypeptide: MAVLTHNEASQKVDELRKKLDKWADDYYAKDAPVVEDAVYDKTYQELVELEEQFPDLVTADSITQRVGGEIKSDLSKVEHPVPMLSMGDVFSKDELKEFDERITKLVGHSVAYNVELKIDGLSLSLEYTDGKLTRASTRGNGRVGEDVTANAKFIKDIPQTLPEPLTTEVRGECYMEKEAFATLNAERDEKGEQVFANPRNAAAGSLRQLDARITKKRNLSTFIYTWVNPPRNITSQHQAIDEMNRLGFHTNQSGRRFESMDEVFKFIDEYTAKRNDLSYGIDGIVLKVDDLSLQNELGNTVKVPRWEIAYKFPPEEQETVVRNIEWTVGRTGVVTPTAVMDPVKLAGTIVSRASLHNPDYLREKGVRIGDTVKLHKAGDIIPEISSVVLSKRPKDSKPYEIPNVCPSCGETLVHLQDEVALRCINPMCPAQIEEGIIHFASRGAMNIMGLGPRIVKQLIDKGFINDVADLYQLTPDQLGQLDHFKEKSITNLLSSIENSKQNSAELLLYGLGIDHVGAKAARLILEKYKNLEKVSQLTVPELTSIDTIGETIAESLTAYFNQPSAQKLLQELRDSGLNMEYLGTVEEEAPDNFFKEKTVVLTGKLSAFTRSEFTKKLQDLGAKVTGSVSKKTDYLIYGADAGSKKDKAEKLQVPMLTEQEAIAKIEK.

Residues 37–41 (DAVYD), 86–87 (SM), and Glu-116 contribute to the NAD(+) site. Lys-118 acts as the N6-AMP-lysine intermediate in catalysis. NAD(+) is bound by residues Arg-139, Glu-173, Lys-288, and Lys-312. Zn(2+) contacts are provided by Cys-406, Cys-409, Cys-424, and Cys-429. In terms of domain architecture, BRCT spans 590–668 (APDNFFKEKT…EQEAIAKIEK (79 aa)).

The protein belongs to the NAD-dependent DNA ligase family. LigA subfamily. Mg(2+) is required as a cofactor. Requires Mn(2+) as cofactor.

It catalyses the reaction NAD(+) + (deoxyribonucleotide)n-3'-hydroxyl + 5'-phospho-(deoxyribonucleotide)m = (deoxyribonucleotide)n+m + AMP + beta-nicotinamide D-nucleotide.. Its function is as follows. DNA ligase that catalyzes the formation of phosphodiester linkages between 5'-phosphoryl and 3'-hydroxyl groups in double-stranded DNA using NAD as a coenzyme and as the energy source for the reaction. It is essential for DNA replication and repair of damaged DNA. The sequence is that of DNA ligase from Lactobacillus johnsonii (strain CNCM I-12250 / La1 / NCC 533).